A 486-amino-acid chain; its full sequence is MSTFYTVISWLLVFSYWLLIAGVTLRILMKRRAVPSAMAWLLVIYILPLVGIVAYLSFGELHLGKRRAERASKMWPSTAKWLRELKEYRRIFATENSEVASALFQLCERRQGVGGVKGNQLQLMTTFDDTIKALLRDIELARNNIEMVFYIWQPGGLVEQVTSSLISAARRGVHCRILLDSAGSVQFFRQHHPELMRTAGIEVVEALKVNLFRAFLRRMDLRQHRKIILIDSRIAYTGSMNMVDPRLFKQDAGVGQWIDLMARIEGPVATTLGIIYCCDWEMETGKRLLPPPPDVNVMPFEQESGHTIQVIASGPGYPEEMIHQALLTSVYSARKQLIMTTPYFVPSDDLLHAICTAAQRGVDVSIIVPHKNDSVLVGWASRAFFTELLAAGVKIYQFKDGLLHTKSVLVDGQLSLVGTVNLDMRSLWLNFEITLVIDDAGFGSDLACVQEDYIARSRLLNATQWQNRPYWQRIVERLFYFFSPLL.

The next 2 helical transmembrane spans lie at 3-23 and 38-58; these read TFYT…IAGV and MAWL…YLSF. 2 consecutive PLD phosphodiesterase domains span residues 219–246 and 399–426; these read MDLR…VDPR and KDGL…DMRS. Catalysis depends on residues histidine 224, lysine 226, aspartate 231, histidine 404, lysine 406, and aspartate 411.

Belongs to the phospholipase D family. Cardiolipin synthase subfamily. ClsA sub-subfamily.

The protein localises to the cell inner membrane. It catalyses the reaction 2 a 1,2-diacyl-sn-glycero-3-phospho-(1'-sn-glycerol) = a cardiolipin + glycerol. In terms of biological role, catalyzes the reversible phosphatidyl group transfer from one phosphatidylglycerol molecule to another to form cardiolipin (CL) (diphosphatidylglycerol) and glycerol. The protein is Cardiolipin synthase A of Pectobacterium atrosepticum (strain SCRI 1043 / ATCC BAA-672) (Erwinia carotovora subsp. atroseptica).